Here is a 424-residue protein sequence, read N- to C-terminus: Glutamate-1-semialdehyde 2,1-aminomutase (424 aa).

An N6-(pyridoxal phosphate)lysine modification is found at lysine 263.

The protein belongs to the class-III pyridoxal-phosphate-dependent aminotransferase family. HemL subfamily. Homodimer. Requires pyridoxal 5'-phosphate as cofactor.

The protein resides in the cytoplasm. It catalyses the reaction (S)-4-amino-5-oxopentanoate = 5-aminolevulinate. It functions in the pathway porphyrin-containing compound metabolism; protoporphyrin-IX biosynthesis; 5-aminolevulinate from L-glutamyl-tRNA(Glu): step 2/2. This Campylobacter jejuni subsp. jejuni serotype O:6 (strain 81116 / NCTC 11828) protein is Glutamate-1-semialdehyde 2,1-aminomutase.